Consider the following 179-residue polypeptide: Large ribosomal subunit protein uL6c (179 aa).

This sequence belongs to the universal ribosomal protein uL6 family. Part of the 50S ribosomal subunit.

The protein localises to the plastid. It localises to the chloroplast. Its function is as follows. Binds 23S rRNA. The chain is Large ribosomal subunit protein uL6c (rpl6) from Trieres chinensis (Marine centric diatom).